An 81-amino-acid polypeptide reads, in one-letter code: Photosystem I iron-sulfur center (81 aa).

4Fe-4S ferredoxin-type domains lie at 2–31 and 39–68; these read AHSV…MIPW and IASA…VRVY. Positions 11, 14, 17, 21, 48, 51, 54, and 58 each coordinate [4Fe-4S] cluster.

In terms of assembly, the eukaryotic PSI reaction center is composed of at least 11 subunits. [4Fe-4S] cluster serves as cofactor.

It localises to the plastid. The protein localises to the chloroplast thylakoid membrane. The enzyme catalyses reduced [plastocyanin] + hnu + oxidized [2Fe-2S]-[ferredoxin] = oxidized [plastocyanin] + reduced [2Fe-2S]-[ferredoxin]. In terms of biological role, apoprotein for the two 4Fe-4S centers FA and FB of photosystem I (PSI); essential for photochemical activity. FB is the terminal electron acceptor of PSI, donating electrons to ferredoxin. The C-terminus interacts with PsaA/B/D and helps assemble the protein into the PSI complex. Required for binding of PsaD and PsaE to PSI. PSI is a plastocyanin-ferredoxin oxidoreductase, converting photonic excitation into a charge separation, which transfers an electron from the donor P700 chlorophyll pair to the spectroscopically characterized acceptors A0, A1, FX, FA and FB in turn. The polypeptide is Photosystem I iron-sulfur center (Adiantum capillus-veneris (Maidenhair fern)).